Reading from the N-terminus, the 201-residue chain is Small ribosomal subunit protein uS4c (201 aa).

The S4 RNA-binding domain maps to 89-150 (MRLDNILFRL…KQRSKVLIQN (62 aa)).

It belongs to the universal ribosomal protein uS4 family. In terms of assembly, part of the 30S ribosomal subunit. Contacts protein S5. The interaction surface between S4 and S5 is involved in control of translational fidelity.

It is found in the plastid. The protein localises to the chloroplast. Its function is as follows. One of the primary rRNA binding proteins, it binds directly to 16S rRNA where it nucleates assembly of the body of the 30S subunit. Functionally, with S5 and S12 plays an important role in translational accuracy. The polypeptide is Small ribosomal subunit protein uS4c (rps4) (Dioscorea elephantipes (Elephant's foot yam)).